The chain runs to 103 residues: Histone H4 (103 aa).

A compositionally biased stretch (gly residues) spans 1 to 14; sequence MTGRGKGGKGLGKG. Positions 1–20 are disordered; the sequence is MTGRGKGGKGLGKGGAKRHR. An N6-acetyl-N6-methyllysine; alternate mark is found at Lys-6 and Lys-13. The DNA-binding element occupies 17–21; sequence KRHRK.

The protein belongs to the histone H4 family. In terms of assembly, the nucleosome is a histone octamer containing two molecules each of H2A, H2B, H3 and H4 assembled in one H3-H4 heterotetramer and two H2A-H2B heterodimers. The octamer wraps approximately 147 bp of DNA.

The protein localises to the nucleus. It localises to the chromosome. In terms of biological role, core component of nucleosome. Nucleosomes wrap and compact DNA into chromatin, limiting DNA accessibility to the cellular machineries which require DNA as a template. Histones thereby play a central role in transcription regulation, DNA repair, DNA replication and chromosomal stability. DNA accessibility is regulated via a complex set of post-translational modifications of histones, also called histone code, and nucleosome remodeling. This Diadromus pulchellus (Parasitic wasp) protein is Histone H4.